Reading from the N-terminus, the 403-residue chain is Formate-dependent phosphoribosylglycinamide formyltransferase (403 aa).

N(1)-(5-phospho-beta-D-ribosyl)glycinamide contacts are provided by residues 27 to 28 (EL) and E87. Residues R120, K161, 166–171 (SSGKGQ), 201–204 (EGFV), and E209 contribute to the ATP site. Residues 125–319 (RLAAEELGLP…EFELHARAIL (195 aa)) form the ATP-grasp domain. Positions 278 and 290 each coordinate Mg(2+). Residues D297, K366, and 373–374 (RR) contribute to the N(1)-(5-phospho-beta-D-ribosyl)glycinamide site. The interval 382–403 (GPDVETARSRAREAASRVEPVA) is disordered. The span at 386-397 (ETARSRAREAAS) shows a compositional bias: basic and acidic residues.

Belongs to the PurK/PurT family. As to quaternary structure, homodimer.

It catalyses the reaction N(1)-(5-phospho-beta-D-ribosyl)glycinamide + formate + ATP = N(2)-formyl-N(1)-(5-phospho-beta-D-ribosyl)glycinamide + ADP + phosphate + H(+). Its pathway is purine metabolism; IMP biosynthesis via de novo pathway; N(2)-formyl-N(1)-(5-phospho-D-ribosyl)glycinamide from N(1)-(5-phospho-D-ribosyl)glycinamide (formate route): step 1/1. Involved in the de novo purine biosynthesis. Catalyzes the transfer of formate to 5-phospho-ribosyl-glycinamide (GAR), producing 5-phospho-ribosyl-N-formylglycinamide (FGAR). Formate is provided by PurU via hydrolysis of 10-formyl-tetrahydrofolate. The protein is Formate-dependent phosphoribosylglycinamide formyltransferase of Rhodococcus jostii (strain RHA1).